A 506-amino-acid polypeptide reads, in one-letter code: NADH-quinone oxidoreductase subunit N 2 (506 aa).

The next 14 membrane-spanning stretches (helical) occupy residues 11 to 31 (SLAY…LVVW), 44 to 64 (LVIL…YFLA), 82 to 102 (FSNL…LFLV), 117 to 137 (SGEL…MAAS), 140 to 160 (LLLI…LAGF), 175 to 195 (VIFG…IFGI), 222 to 242 (VFVG…AAPF), 254 to 274 (PTPV…AVLI), 289 to 309 (GVAT…MTVG), 323 to 345 (LAYS…SGAG), 356 to 376 (YCFM…ESGG), 394 to 414 (AAAM…AGFI), 419 to 439 (LFSA…VVGV), and 472 to 492 (LLGG…VYWG).

Belongs to the complex I subunit 2 family. As to quaternary structure, NDH-1 is composed of 14 different subunits. Subunits NuoA, H, J, K, L, M, N constitute the membrane sector of the complex.

It localises to the cell inner membrane. The enzyme catalyses a quinone + NADH + 5 H(+)(in) = a quinol + NAD(+) + 4 H(+)(out). NDH-1 shuttles electrons from NADH, via FMN and iron-sulfur (Fe-S) centers, to quinones in the respiratory chain. The immediate electron acceptor for the enzyme in this species is believed to be ubiquinone. Couples the redox reaction to proton translocation (for every two electrons transferred, four hydrogen ions are translocated across the cytoplasmic membrane), and thus conserves the redox energy in a proton gradient. This is NADH-quinone oxidoreductase subunit N 2 from Sorangium cellulosum (strain So ce56) (Polyangium cellulosum (strain So ce56)).